The primary structure comprises 239 residues: MKVTLFVTCLVDMFETNVGKATVEVLERLGCEIEFPEAQVCCGQPAYNSGHVESAKEAMKHMIETFEDAEYIVTPSGSCATMFHEYPHVFKDDPKWAARAQKVADKTYELTQFIVDVLKVTDVGASLKGTATMHKSCHMTRMLGVKEAPGILLSNVKGLTVKELPNVQNCCGFGGTFSVKMTPISEQMVDEKVDSVMETGADYLIGADCGCLLNIGGRIERLGKKVRVMHIAEVLNSRS.

The protein belongs to the LutA/YkgE family.

Its function is as follows. Is involved in L-lactate degradation and allows cells to grow with lactate as the sole carbon source. This chain is Lactate utilization protein A, found in Bacillus cytotoxicus (strain DSM 22905 / CIP 110041 / 391-98 / NVH 391-98).